The sequence spans 430 residues: Asparagine--tRNA ligase (430 aa).

The protein belongs to the class-II aminoacyl-tRNA synthetase family. As to quaternary structure, homodimer.

Its subcellular location is the cytoplasm. The catalysed reaction is tRNA(Asn) + L-asparagine + ATP = L-asparaginyl-tRNA(Asn) + AMP + diphosphate + H(+). The sequence is that of Asparagine--tRNA ligase from Staphylococcus aureus (strain MW2).